The chain runs to 198 residues: dCTP deaminase (198 aa).

DCTP-binding positions include 110–115 (RSSLAR), D128, 136–138 (VLE), Y171, K178, and Q182. The Proton donor/acceptor role is filled by E138. The disordered stretch occupies residues 168-198 (ARPYNKREDAKYRDQKGAVASRISQDEKVNK). A compositionally biased stretch (basic and acidic residues) spans 172 to 183 (NKREDAKYRDQK).

This sequence belongs to the dCTP deaminase family. In terms of assembly, homotrimer.

The catalysed reaction is dCTP + H2O + H(+) = dUTP + NH4(+). Its pathway is pyrimidine metabolism; dUMP biosynthesis; dUMP from dCTP (dUTP route): step 1/2. Catalyzes the deamination of dCTP to dUTP. This chain is dCTP deaminase, found in Colwellia psychrerythraea (strain 34H / ATCC BAA-681) (Vibrio psychroerythus).